Reading from the N-terminus, the 392-residue chain is DNA replication and repair protein RecF (392 aa).

30–37 contacts ATP; sequence GPNAAGKT.

This sequence belongs to the RecF family.

The protein resides in the cytoplasm. The RecF protein is involved in DNA metabolism; it is required for DNA replication and normal SOS inducibility. RecF binds preferentially to single-stranded, linear DNA. It also seems to bind ATP. This is DNA replication and repair protein RecF from Chloroflexus aggregans (strain MD-66 / DSM 9485).